The primary structure comprises 252 residues: Urease accessory protein UreD (252 aa).

It belongs to the UreD family. As to quaternary structure, ureD, UreF and UreG form a complex that acts as a GTP-hydrolysis-dependent molecular chaperone, activating the urease apoprotein by helping to assemble the nickel containing metallocenter of UreC. The UreE protein probably delivers the nickel.

The protein localises to the cytoplasm. Functionally, required for maturation of urease via the functional incorporation of the urease nickel metallocenter. In Streptomyces avermitilis (strain ATCC 31267 / DSM 46492 / JCM 5070 / NBRC 14893 / NCIMB 12804 / NRRL 8165 / MA-4680), this protein is Urease accessory protein UreD.